Reading from the N-terminus, the 218-residue chain is MSLRSVLVAALAALAVATPVPENSLQERQLMSSNDVEDGVCRDVTFIFARGSTEQGNMGFVVGPEVCTSLKADLGSGKVACQGVGGAYTASLAPNFLSANTDPQSIQAATDLFEKAVANCPNTQIVAGGYSQGSAVMDNSIQALPADIQEKVKGVVLFGFTRNLQDNGQIPNYPKEDVKVYCALGDLVCSGTLIITPAHMTYGVNAGDAAQFLASKVQ.

A signal peptide spans methionine 1–alanine 17. Disulfide bonds link cysteine 41/cysteine 120 and cysteine 67/cysteine 81. Residue serine 131 is the Nucleophile of the active site. A disulfide bridge connects residues cysteine 182 and cysteine 189. Residue aspartate 186 is part of the active site. Histidine 199 serves as the catalytic Proton donor/acceptor.

The protein belongs to the cutinase family.

The protein localises to the secreted. The catalysed reaction is cutin + H2O = cutin monomers.. Catalyzes the hydrolysis of complex carboxylic polyesters found in the cell wall of plants. Degrades cutin, a macromolecule that forms the structure of the plant cuticle. The protein is Probable cutinase 3 of Aspergillus terreus (strain NIH 2624 / FGSC A1156).